The chain runs to 615 residues: Vitamin B12 transporter BtuB (615 aa).

Positions 1 to 20 are cleaved as a signal peptide; the sequence is MIKKISLLTALSVTAFSGWA. Positions 26–33 match the TonB box motif; the sequence is NAMVVTAN. In terms of domain architecture, TBDR plug spans 38–152; that stretch reads PVNSVLAPTT…IGGVVNIITT (115 aa). Cyanocob(III)alamin is bound by residues Ser-85, Asn-92, and 110–111; that span reads IS. The TBDR beta-barrel domain occupies 155 to 615; that stretch reads KNGTTLNAGV…EYYLTGSYTF (461 aa). 3 beta stranded membrane passes run 158 to 165, 169 to 178, and 184 to 195; these read TTLNAGVG, YQSYDAATQQ, and TTATLAGNYVYT. 4 residues coordinate Ca(2+): Asp-199, Gln-210, Asp-212, and Asp-214. Transmembrane regions (beta stranded) follow at residues 216 to 226 and 231 to 247; these read FMSKSLYGTVE and DQFS…NRTD. Ca(2+)-binding residues include Tyr-248, Asp-249, and Asp-255. Transmembrane regions (beta stranded) follow at residues 257 to 271, 273 to 290, 303 to 319, 322 to 331, 347 to 363, 365 to 375, 379 to 394, 397 to 411, 429 to 438, 444 to 453, 468 to 486, 490 to 505, 513 to 525, and 531 to 546; these read RQLY…LRYQ, GIYS…KDYD, TLVD…NVLQ, AGTVSAGVDW, ESQN…QRFA, IVLEGSVRGDD, FGWH…WEFI, YSLI…KAPN, ESKQWESGVE, VIWRVSGYRN, VYEN…TASF, PVGH…SRNA, RRAK…QLDW, and DWSV…YDKD. Cyanocob(III)alamin is bound at residue Thr-303. Cyanocob(III)alamin is bound at residue Arg-513. Position 547 (Tyr-547) interacts with cyanocob(III)alamin. Transmembrane regions (beta stranded) follow at residues 559–573, 586–597, and 603–615; these read TVKL…LAAS, IANLFDKDYETA, and AGRE…SYTF. Positions 598–615 match the TonB C-terminal box motif; that stretch reads YGYRTAGREYYLTGSYTF.

It belongs to the TonB-dependent receptor family. BtuB (TC 1.B.14.3.1) subfamily.

It is found in the cell outer membrane. In terms of biological role, involved in the active translocation of vitamin B12 (cyanocobalamin) across the outer membrane to the periplasmic space. It derives its energy for transport by interacting with the trans-periplasmic membrane protein TonB. The chain is Vitamin B12 transporter BtuB from Pectobacterium atrosepticum (strain SCRI 1043 / ATCC BAA-672) (Erwinia carotovora subsp. atroseptica).